The following is an 857-amino-acid chain: Blue light receptor lreA (857 aa).

3 consecutive PAS domains span residues 306-328, 479-542, and 608-642; these read IIYV…VGQN, LVEN…TTTD, and LSKS…DLMD. The GATA-type zinc finger occupies 811–836; the sequence is CAICQTKKTPEWRRGPSGERDLCNSC.

In terms of biological role, transcription factor that acts as a blue light sensor. Plays crucial roles in fungal growth and asexual development. Involved in conidiophore formation, sclerotium production, and conidial stress tolerance. Promotes conidiation by inducing the expression of brlA and abaA. Positively regulates the fungal pathogenicity towards maize. In blue light conditions, inhibits aflatoxin B1 (AFB1) biosynthesis by down-regulating the expression of key genes such as aflA, aflJ, aflH, aflO and aflK. The protein is Blue light receptor lreA of Aspergillus flavus.